Consider the following 217-residue polypeptide: Adenylate kinase (217 aa).

An ATP-binding site is contributed by 10–15 (GAGKGT). Residues 30–59 (STGDMLREAVAKGTELGKKAKEYMDKGELV) are NMP. AMP is bound by residues T31, R36, 57-59 (ELV), 85-88 (GFPR), and Q92. Residues 126 to 163 (YRRTCRNCGAVYHLIYAPPKEDNKCDKCGGELYQRDDD) form an LID region. R127 lines the ATP pocket. Positions 130 and 133 each coordinate Zn(2+). An ATP-binding site is contributed by 136 to 137 (VY). 2 residues coordinate Zn(2+): C150 and C153. Positions 160 and 171 each coordinate AMP. K199 is a binding site for ATP.

Belongs to the adenylate kinase family. Monomer.

The protein resides in the cytoplasm. It catalyses the reaction AMP + ATP = 2 ADP. The protein operates within purine metabolism; AMP biosynthesis via salvage pathway; AMP from ADP: step 1/1. Its function is as follows. Catalyzes the reversible transfer of the terminal phosphate group between ATP and AMP. Plays an important role in cellular energy homeostasis and in adenine nucleotide metabolism. The sequence is that of Adenylate kinase from Archaeoglobus fulgidus (strain ATCC 49558 / DSM 4304 / JCM 9628 / NBRC 100126 / VC-16).